Consider the following 204-residue polypeptide: Holliday junction branch migration complex subunit RuvA (204 aa).

Positions 1 to 64 are domain I; sequence MISRMKGIIL…EDAQLLYGFH (64 aa). Positions 65–143 are domain II; the sequence is HPKERAMFSE…NLNKNLFKST (79 aa). Residues 144–155 form a flexible linker region; that stretch reads ADHMLSSVSTDL. The domain III stretch occupies residues 156 to 204; it reads SAKSAEAEAISALISLGYKPQEAAQLIKNIAQPDLDSQALIKHALRSTL.

The protein belongs to the RuvA family. In terms of assembly, homotetramer. Forms an RuvA(8)-RuvB(12)-Holliday junction (HJ) complex. HJ DNA is sandwiched between 2 RuvA tetramers; dsDNA enters through RuvA and exits via RuvB. An RuvB hexamer assembles on each DNA strand where it exits the tetramer. Each RuvB hexamer is contacted by two RuvA subunits (via domain III) on 2 adjacent RuvB subunits; this complex drives branch migration. In the full resolvosome a probable DNA-RuvA(4)-RuvB(12)-RuvC(2) complex forms which resolves the HJ.

Its subcellular location is the cytoplasm. In terms of biological role, the RuvA-RuvB-RuvC complex processes Holliday junction (HJ) DNA during genetic recombination and DNA repair, while the RuvA-RuvB complex plays an important role in the rescue of blocked DNA replication forks via replication fork reversal (RFR). RuvA specifically binds to HJ cruciform DNA, conferring on it an open structure. The RuvB hexamer acts as an ATP-dependent pump, pulling dsDNA into and through the RuvAB complex. HJ branch migration allows RuvC to scan DNA until it finds its consensus sequence, where it cleaves and resolves the cruciform DNA. This Hamiltonella defensa subsp. Acyrthosiphon pisum (strain 5AT) protein is Holliday junction branch migration complex subunit RuvA.